The sequence spans 626 residues: Phosphomethylpyrimidine synthase (626 aa).

Substrate contacts are provided by residues Asn-237, Met-266, Tyr-295, His-331, 351–353 (SRG), 392–395 (DGLR), and Glu-431. His-435 is a binding site for Zn(2+). Tyr-458 is a binding site for substrate. His-499 serves as a coordination point for Zn(2+). The [4Fe-4S] cluster site is built by Cys-579, Cys-582, and Cys-587.

The protein belongs to the ThiC family. As to quaternary structure, homodimer. [4Fe-4S] cluster serves as cofactor.

It carries out the reaction 5-amino-1-(5-phospho-beta-D-ribosyl)imidazole + S-adenosyl-L-methionine = 4-amino-2-methyl-5-(phosphooxymethyl)pyrimidine + CO + 5'-deoxyadenosine + formate + L-methionine + 3 H(+). The protein operates within cofactor biosynthesis; thiamine diphosphate biosynthesis. Functionally, catalyzes the synthesis of the hydroxymethylpyrimidine phosphate (HMP-P) moiety of thiamine from aminoimidazole ribotide (AIR) in a radical S-adenosyl-L-methionine (SAM)-dependent reaction. This chain is Phosphomethylpyrimidine synthase, found in Cupriavidus pinatubonensis (strain JMP 134 / LMG 1197) (Cupriavidus necator (strain JMP 134)).